Reading from the N-terminus, the 442-residue chain is Tryptophan synthase beta chain 2 (442 aa).

An N6-(pyridoxal phosphate)lysine modification is found at lysine 122.

The protein belongs to the TrpB family. Tetramer of two alpha and two beta chains. The cofactor is pyridoxal 5'-phosphate.

It carries out the reaction (1S,2R)-1-C-(indol-3-yl)glycerol 3-phosphate + L-serine = D-glyceraldehyde 3-phosphate + L-tryptophan + H2O. The protein operates within amino-acid biosynthesis; L-tryptophan biosynthesis; L-tryptophan from chorismate: step 5/5. Functionally, the beta subunit is responsible for the synthesis of L-tryptophan from indole and L-serine. The sequence is that of Tryptophan synthase beta chain 2 (trpB2) from Methanosarcina mazei (strain ATCC BAA-159 / DSM 3647 / Goe1 / Go1 / JCM 11833 / OCM 88) (Methanosarcina frisia).